We begin with the raw amino-acid sequence, 129 residues long: Small ribosomal subunit protein eS6 (129 aa).

Belongs to the eukaryotic ribosomal protein eS6 family.

In Archaeoglobus fulgidus (strain ATCC 49558 / DSM 4304 / JCM 9628 / NBRC 100126 / VC-16), this protein is Small ribosomal subunit protein eS6.